The sequence spans 388 residues: Gastricsin (388 aa).

An N-terminal signal peptide occupies residues 1–16; the sequence is MKWLLVALVCLHLLEA. Residues 17-59 constitute a propeptide, activation peptide; the sequence is AVIKVPLRKFKSIRETLKEKGLLKEFLNTHKYDPALKYRFGDF. The Peptidase A1 domain maps to 73-385; sequence YFGEISIGTP…DMANNRVGFA (313 aa). Residue D91 is part of the active site. Intrachain disulfides connect C104–C109 and C267–C271. D276 is a catalytic residue. A disulfide bridge links C310 with C343.

This sequence belongs to the peptidase A1 family.

It localises to the secreted. It carries out the reaction More restricted specificity than pepsin A, but shows preferential cleavage at Tyr-|-Xaa bonds. High activity on hemoglobin.. Hydrolyzes a variety of proteins. The protein is Gastricsin (PGC) of Oryctolagus cuniculus (Rabbit).